The sequence spans 707 residues: Casein kinase 1-like protein HD16 (707 aa).

Residues Tyr-19 to Gly-67 are disordered. Low complexity predominate over residues Ala-24–Gly-37. The Protein kinase domain occupies Tyr-147–Ile-425. Residues Leu-153 to Val-161 and Lys-184 each bind ATP. The Proton acceptor role is filled by Asp-276.

The protein belongs to the protein kinase superfamily. CK1 Ser/Thr protein kinase family. Casein kinase I subfamily. In terms of assembly, monomer. Interacts with GHD7 (via C-terminus). Interacts with SLR1. In terms of processing, autophosphorylated. In terms of tissue distribution, expressed in roots, leaves and stems. Expressed in leaf vascular bundles, and proximal regions of the shoot and roots.

The protein localises to the cytoplasm. The protein resides in the nucleus. It catalyses the reaction L-seryl-[protein] + ATP = O-phospho-L-seryl-[protein] + ADP + H(+). The catalysed reaction is L-threonyl-[protein] + ATP = O-phospho-L-threonyl-[protein] + ADP + H(+). In terms of biological role, casein kinases are operationally defined by their preferential utilization of acidic proteins such as caseins as substrates. It can phosphorylate a large number of proteins. Can phosphorylate casein on threonine residues in vitro. Involved in the regulation of flowering time through gibberellin (GA) signaling, and independently of photoperiod. Phosphorylates the DELLA protein SLR1, stabilizing SLR1 protein and sustaining SLR1 activity as repressor of GA signaling. Required for normal development of male floral organs and grains, through modulation of GA signaling. Targeted and repressed by the homeobox protein HAZ1 during GA signaling. Can phosphorylate phosvitin and SLR1 in vitro. Is not required for clock function in either the presence or the absence of light signals. Involved in a genetic control pathway for photoperiodic flowering under long day (LD) conditions that includes HD1, GHD7, HD5 and HD2. Phosphorylates and activates GHD7, a major floral repressor under LD conditions. Phosphorylation of GHD7 enhances its function in the repression of EHD1, HD3A and HD3B/RFT1, and obviously delaying flowering. This Oryza sativa subsp. japonica (Rice) protein is Casein kinase 1-like protein HD16.